We begin with the raw amino-acid sequence, 133 residues long: uncharacterized protein (133 aa).

Residues 1–130 enclose the FAS1 domain; it reads MPNIVEIAVS…GIIHVIDNVI (130 aa).

This is an uncharacterized protein from Synechocystis sp. (strain ATCC 27184 / PCC 6803 / Kazusa).